A 417-amino-acid chain; its full sequence is MFKYDINIANYDTALWKAIELEAKRQEEHIELIASENYTSPRVMQAQGSILTNKYAEGYSGKRYYGGCVYVDQVETLAIDRAKALFECDYANVQPHSGSQANFAVYTALLKPGDTILGMNLAHGGHLTHGASVNFSGKMYNVISYGVNKNGYIDYEQLNKLATMHKPKMIIGGFSAYSRVVDWDIMRQVADSIKAFLFVDMAHIAGLVAAGVYPNPVPYADVVTTTTHKTLAGPRGGLILAQGGSKEMYKKLDSAVFPGAQGGPLMHVIAGKAIALKEAMEPEFKIYQHQVVKNAKTMVNVFLNRNFNVVSGGTDNHLFLLDLVDKNITGQEADAALSYTNITVNKNIIPNDPQSSFVTSGIRIGTPAITRRGFNETDAYQLANWICDVLENINNEVVLNATKKKVLNICASHPVYS.

Residues L121 and 125–127 contribute to the (6S)-5,6,7,8-tetrahydrofolate site; that span reads GHL. N6-(pyridoxal phosphate)lysine is present on K229. 355–357 serves as a coordination point for (6S)-5,6,7,8-tetrahydrofolate; it reads SSF.

Belongs to the SHMT family. In terms of assembly, homodimer. Pyridoxal 5'-phosphate serves as cofactor.

It is found in the cytoplasm. It catalyses the reaction (6R)-5,10-methylene-5,6,7,8-tetrahydrofolate + glycine + H2O = (6S)-5,6,7,8-tetrahydrofolate + L-serine. It participates in one-carbon metabolism; tetrahydrofolate interconversion. It functions in the pathway amino-acid biosynthesis; glycine biosynthesis; glycine from L-serine: step 1/1. Its function is as follows. Catalyzes the reversible interconversion of serine and glycine with tetrahydrofolate (THF) serving as the one-carbon carrier. This reaction serves as the major source of one-carbon groups required for the biosynthesis of purines, thymidylate, methionine, and other important biomolecules. Also exhibits THF-independent aldolase activity toward beta-hydroxyamino acids, producing glycine and aldehydes, via a retro-aldol mechanism. In Baumannia cicadellinicola subsp. Homalodisca coagulata, this protein is Serine hydroxymethyltransferase.